The chain runs to 243 residues: uncharacterized protein (243 aa).

The GP-PDE domain maps to 2 to 240; sequence TKIFAHRGAS…DFPEKASALL (239 aa).

This is an uncharacterized protein from Bacillus subtilis (strain 168).